Consider the following 3010-residue polypeptide: Probable polyketide synthase 2 (3010 aa).

One can recognise a Ketosynthase family 3 (KS3) domain in the interval 9 to 432; it reads SRDVAVIGIG…GSNACLLLSE (424 aa). Residues C174, H313, and H353 each act as for beta-ketoacyl synthase activity in the active site. Residues 629–662 form an acyl/malonyl transferase region; sequence GINPSINVGHSFGEISSACCSGMLDLETACFIVY. The For acyl/malonyl transferase activity role is filled by S639. The tract at residues 944–1063 is N-terminal hotdog fold; the sequence is ATQLGYRNDV…ARFSVLKHNS (120 aa). The 292-residue stretch at 944–1235 folds into the PKS/mFAS DH domain; it reads ATQLGYRNDV…YSSISTDIKN (292 aa). The active-site Proton acceptor; for dehydratase activity is the H976. Residues 1080 to 1235 are C-terminal hotdog fold; the sequence is NWTTIKRKEF…YSSISTDIKN (156 aa). D1146 acts as the Proton donor; for dehydratase activity in catalysis. A Carrier domain is found at 2482–2559; that stretch reads DNELSIRDDI…QLIQAVIQAV (78 aa). S2519 is modified (O-(pantetheine 4'-phosphoryl)serine).

It depends on pantetheine 4'-phosphate as a cofactor.

Functionally, probable polyketide synthase. This chain is Probable polyketide synthase 2 (pks2), found in Dictyostelium discoideum (Social amoeba).